A 160-amino-acid polypeptide reads, in one-letter code: Nucleotide-binding protein Noc_2254 (160 aa).

Belongs to the YajQ family.

Its function is as follows. Nucleotide-binding protein. This is Nucleotide-binding protein Noc_2254 from Nitrosococcus oceani (strain ATCC 19707 / BCRC 17464 / JCM 30415 / NCIMB 11848 / C-107).